The sequence spans 616 residues: Homeodomain-interacting protein kinase 4 (616 aa).

The 337-residue stretch at 11-347 (YDIIEVLGKG…PSAALRHPFV (337 aa)) folds into the Protein kinase domain. Residues 17–25 (LGKGTFGEV) and K40 contribute to the ATP site. D136 functions as the Proton acceptor in the catalytic mechanism. Positions 486–616 (HKARKPPAGS…SFLQHVTGHH (131 aa)) are disordered. Residues 496 to 511 (KSDSNFSNLIRLSQVS) show a composition bias toward polar residues. S511 is subject to Phosphoserine.

The protein belongs to the protein kinase superfamily. CMGC Ser/Thr protein kinase family. HIPK subfamily. Post-translationally, autophosphorylated.

It is found in the cytoplasm. The catalysed reaction is L-seryl-[protein] + ATP = O-phospho-L-seryl-[protein] + ADP + H(+). It carries out the reaction L-threonyl-[protein] + ATP = O-phospho-L-threonyl-[protein] + ADP + H(+). Protein kinase that phosphorylates human TP53 at Ser-9, and thus induces TP53 repression of BIRC5 promoter. May act as a corepressor of transcription factors (Potential). This Homo sapiens (Human) protein is Homeodomain-interacting protein kinase 4 (HIPK4).